The primary structure comprises 366 residues: Galactoside alpha-(1,2)-fucosyltransferase 1 (366 aa).

The Cytoplasmic portion of the chain corresponds to 1–8 (MWPLSHRH). Residues 9–25 (LCLAFLLVCVLSAISFF) form a helical; Signal-anchor for type II membrane protein membrane-spanning segment. Topologically, residues 26–366 (LHVHQDSFRH…LSPLWTLAEP (341 aa)) are lumenal. Residues N66, N302, and N328 are each glycosylated (N-linked (GlcNAc...) asparagine).

Belongs to the glycosyltransferase 11 family.

Its subcellular location is the golgi apparatus. The protein resides in the golgi stack membrane. The enzyme catalyses a beta-D-galactosyl-(1-&gt;4)-N-acetyl-beta-D-glucosaminyl derivative + GDP-beta-L-fucose = an alpha-L-Fuc-(1-&gt;2)-beta-D-Gal-(1-&gt;4)-beta-D-GlcNAc derivative + GDP + H(+). It carries out the reaction a ganglioside GA1 + GDP-beta-L-fucose = a ganglioside Fuc-GA1 + GDP + H(+). It catalyses the reaction a beta-D-Gal-(1-&gt;3)-beta-D-GlcNAc-(1-&gt;3)-beta-D-Gal-(1-&gt;4)-beta-D-Glc-(1&lt;-&gt;1')-Cer(d18:1(4E)) + GDP-beta-L-fucose = alpha-L-fucosyl-(1-&gt;2)- beta-D-galactosyl-(1-&gt;3)-N-acetyl-beta-D-glucosaminyl-(1-&gt;3)-beta-D-galactosyl-(1-&gt;4)-beta-D-glucosyl-(1&lt;-&gt;1')-N-acylsphing-4-enine + GDP + H(+). The catalysed reaction is a neolactoside nLc4Cer(d18:1(4E)) + GDP-beta-L-fucose = a neolactoside IV(2)-alpha-Fuc-nLc4Cer(d18:1(4E)) + GDP + H(+). The enzyme catalyses a ganglioside GM1 + GDP-beta-L-fucose = a ganglioside Fuc-GM1 + GDP + H(+). It carries out the reaction beta-D-galactosyl-(1-&gt;3)-N-acetyl-D-galactosamine + GDP-beta-L-fucose = alpha-L-fucosyl-(1-&gt;2)-beta-D-galactosyl-(1-&gt;3)-N-acetyl-D-galactosamine + GDP + H(+). The protein operates within protein modification; protein glycosylation. In terms of biological role, catalyzes the transfer of L-fucose, from a guanosine diphosphate-beta-L-fucose, to the terminal galactose residue of glycoconjugates through an alpha(1,2) linkage leading to H antigen synthesis that is an intermediate substrate in the synthesis of ABO blood group antigens. H antigen is essential for maturation of the glomerular layer of the main olfactory bulb, in cell migration and early cell-cell contacts during tumor associated angiogenesis. Preferentially fucosylates soluble lactose and to a lesser extent fucosylates glycolipids gangliosides GA1 and GM1a. The polypeptide is Galactoside alpha-(1,2)-fucosyltransferase 1 (Alouatta caraya (Black howler monkey)).